Here is a 208-residue protein sequence, read N- to C-terminus: UPF0637 protein BCB4264_A4063 (208 aa).

Belongs to the UPF0637 family.

The chain is UPF0637 protein BCB4264_A4063 from Bacillus cereus (strain B4264).